The chain runs to 74 residues: Putative antitoxin VapB48 (74 aa).

Possibly the antitoxin component of a type II toxin-antitoxin (TA) system. Its cognate toxin is VapC48 (Potential). The polypeptide is Putative antitoxin VapB48 (vapB48) (Mycobacterium tuberculosis (strain CDC 1551 / Oshkosh)).